Here is a 181-residue protein sequence, read N- to C-terminus: Glutamyl-tRNA(Gln) amidotransferase subunit C, chloroplastic/mitochondrial (181 aa).

The protein belongs to the GatC family. As to quaternary structure, subunit of the heterotrimeric GatCAB amidotransferase (AdT) complex, composed of A, B and C subunits.

The protein resides in the mitochondrion. It localises to the plastid. The protein localises to the chloroplast. It carries out the reaction L-glutamyl-tRNA(Gln) + L-glutamine + ATP + H2O = L-glutaminyl-tRNA(Gln) + L-glutamate + ADP + phosphate + H(+). Its function is as follows. Allows the formation of correctly charged Gln-tRNA(Gln) through the transamidation of misacylated Glu-tRNA(Gln) in chloroplasts and mitochondria. The reaction takes place in the presence of glutamine and ATP through an activated gamma-phospho-Glu-tRNA(Gln). This is Glutamyl-tRNA(Gln) amidotransferase subunit C, chloroplastic/mitochondrial from Picea sitchensis (Sitka spruce).